Reading from the N-terminus, the 113-residue chain is Hydrogenase maturation factor HypA (113 aa).

Histidine 2 is a binding site for Ni(2+). Cysteine 73, cysteine 76, cysteine 89, and cysteine 92 together coordinate Zn(2+).

The protein belongs to the HypA/HybF family.

Involved in the maturation of [NiFe] hydrogenases. Required for nickel insertion into the metal center of the hydrogenase. The sequence is that of Hydrogenase maturation factor HypA from Prosthecochloris aestuarii (strain DSM 271 / SK 413).